The following is an 83-amino-acid chain: FMRFamide-like neuropeptide 23 (83 aa).

The first 24 residues, Met-1 to Gly-24, serve as a signal peptide directing secretion. Positions Ala-25–Glu-36 are excised as a propeptide. Phe-47 carries the phenylalanine amide modification. A propeptide spanning residues Ala-50–Gln-83 is cleaved from the precursor.

This sequence belongs to the FARP (FMRFamide related peptide) family. As to expression, each flp gene is expressed in a distinct set of neurons.

Its subcellular location is the secreted. FMRFamides and FMRFamide-like peptides are neuropeptides. The polypeptide is FMRFamide-like neuropeptide 23 (flp-23) (Caenorhabditis elegans).